Here is a 439-residue protein sequence, read N- to C-terminus: Ribosomal protein uS12 methylthiotransferase RimO (439 aa).

In terms of domain architecture, MTTase N-terminal spans 3–118; that stretch reads KKFYITTLGC…AGKILREKFP (116 aa). Cys12, Cys48, Cys81, Cys157, Cys161, and Cys164 together coordinate [4Fe-4S] cluster. One can recognise a Radical SAM core domain in the interval 143–370; the sequence is NYSKPYAYVK…RDVHLAILEE (228 aa). Residues 373–438 enclose the TRAM domain; that stretch reads ESRIGQTYDA…EYDMNGTWIS (66 aa).

This sequence belongs to the methylthiotransferase family. RimO subfamily. The cofactor is [4Fe-4S] cluster.

Its subcellular location is the cytoplasm. The catalysed reaction is L-aspartate(89)-[ribosomal protein uS12]-hydrogen + (sulfur carrier)-SH + AH2 + 2 S-adenosyl-L-methionine = 3-methylsulfanyl-L-aspartate(89)-[ribosomal protein uS12]-hydrogen + (sulfur carrier)-H + 5'-deoxyadenosine + L-methionine + A + S-adenosyl-L-homocysteine + 2 H(+). Functionally, catalyzes the methylthiolation of an aspartic acid residue of ribosomal protein uS12. This chain is Ribosomal protein uS12 methylthiotransferase RimO, found in Leptospira borgpetersenii serovar Hardjo-bovis (strain JB197).